The chain runs to 108 residues: DNA-directed RNA polymerase III subunit RPC10 (108 aa).

Cys5, Cys8, Cys25, Cys28, Cys69, and Cys72 together coordinate Zn(2+). Residues 5–28 (CPGCGNGLIVEEGQRCHRFACNTC) form a C4-type zinc finger. The TFIIS-type zinc finger occupies 65–107 (TAEPCPKCEHPRAYFMQLQTRYADEPMTTFYKCCNAQCGHRWR). A Hairpin motif is present at residues 88–89 (DE). Zn(2+)-binding residues include Cys98 and Cys102.

Belongs to the archaeal RpoM/eukaryotic RPA12/RPB9/RPC11 RNA polymerase family. Component of the RNA polymerase III complex consisting of 17 subunits: a ten-subunit horseshoe-shaped catalytic core composed of POLR3A/RPC1, POLR3B/RPC2, POLR1C/RPAC1, POLR1D/RPAC2, POLR3K/RPC10, POLR2E/RPABC1, POLR2F/RPABC2, POLR2H/RPABC3, POLR2K/RPABC4 and POLR2L/RPABC5; a mobile stalk composed of two subunits POLR3H/RPC8 and CRCP/RPC9, protruding from the core and functioning primarily in transcription initiation; and additional subunits homologous to general transcription factors of the RNA polymerase II machinery, POLR3C/RPC3-POLR3F/RPC6-POLR3G/RPC7 heterotrimer required for transcription initiation and POLR3D/RPC4-POLR3E/RPC5 heterodimer involved in both transcription initiation and termination.

It is found in the nucleus. Its function is as follows. Core component of RNA polymerase III (Pol III) which synthesizes small non-coding RNAs using the four ribonucleoside triphosphates as substrates. Can mediate Pol I proofreading of the nascent RNA transcript. Anchors into the Pol III active site to constantly monitor transcription fidelity, cleaves mis-incorporated 5'-ribonucleotides and restarts the transcription process. Once Pol III reaches the poly(dT) termination signal, can induce Pol III clamp opening and transcription termination. Pol III plays an important role in sensing and limiting infection by intracellular bacteria and DNA viruses. Acts as a nuclear and cytosolic DNA sensor involved in innate immune response. Can sense non-self dsDNA that serves as template for transcription into dsRNA. The non-self RNA polymerase III transcripts, such as Epstein-Barr virus-encoded RNAs (EBERs) induce type I interferon and NF-kappa-B through the RIG-I pathway. In Bos taurus (Bovine), this protein is DNA-directed RNA polymerase III subunit RPC10 (POLR3K).